The primary structure comprises 365 residues: tRNA (guanine(6)-N2)-methyltransferase (365 aa).

Residues 69–182 (NENSRLLHRV…KDVFFLGIDT (114 aa)) form the THUMP domain. S-adenosyl-L-methionine-binding positions include 198–202 (HPAHL), 228–230 (SGT), glutamate 248, 276–277 (DA), and asparagine 293.

Belongs to the methyltransferase superfamily. In terms of assembly, monomer in solution.

Its subcellular location is the cytoplasm. It catalyses the reaction guanosine(6) in tRNA + S-adenosyl-L-methionine = N(2)-methylguanosine(6) in tRNA + S-adenosyl-L-homocysteine + H(+). Its function is as follows. S-adenosyl-L-methionine-dependent methyltransferase that catalyzes the methylation of the guanosine nucleotide at position 6 (m2G6) in tRNA(Phe). The polypeptide is tRNA (guanine(6)-N2)-methyltransferase (Pyrococcus furiosus (strain ATCC 43587 / DSM 3638 / JCM 8422 / Vc1)).